Here is a 217-residue protein sequence, read N- to C-terminus: Adenylate kinase (217 aa).

10-15 (GAGKGT) is an ATP binding site. The tract at residues 30 to 59 (STGDMFRAAIKAGTALGMKAKEYMDAGSLV) is NMP. AMP is bound by residues T31, R36, 57 to 59 (SLV), 85 to 88 (GFPR), and Q92. The interval 126 to 163 (GRRICRQCGGTYHMVFNPPAAEAVCDKCGGELYQRSDD) is LID. R127 is an ATP binding site. Residues C130 and C133 each contribute to the Zn(2+) site. 136-137 (TY) is an ATP binding site. Zn(2+) is bound by residues C150 and C153. AMP-binding residues include R160 and R171. Q199 lines the ATP pocket.

The protein belongs to the adenylate kinase family. As to quaternary structure, monomer.

The protein resides in the cytoplasm. The catalysed reaction is AMP + ATP = 2 ADP. It participates in purine metabolism; AMP biosynthesis via salvage pathway; AMP from ADP: step 1/1. Its function is as follows. Catalyzes the reversible transfer of the terminal phosphate group between ATP and AMP. Plays an important role in cellular energy homeostasis and in adenine nucleotide metabolism. The chain is Adenylate kinase from Desulfitobacterium hafniense (strain DSM 10664 / DCB-2).